Reading from the N-terminus, the 443-residue chain is D(2) dopamine receptor (443 aa).

Residues 1-37 (MDPLNLSWYDDDLERQNWSRPFNGSDGKADRPHYNYY) are Extracellular-facing. N-linked (GlcNAc...) asparagine glycosylation is found at Asn-5, Asn-17, and Asn-23. The helical transmembrane segment at 38–60 (ATLLTLLIAVIVFGNVLVCMAVS) threads the bilayer. At 61–70 (REKALQTTTN) the chain is on the cytoplasmic side. The helical transmembrane segment at 71-93 (YLIVSLAVADLLVATLVMPWVVY) threads the bilayer. Residues 94–108 (LEVVGEWKFSKIHCD) lie on the Extracellular side of the membrane. A disulfide bridge links Cys-107 with Cys-182. The chain crosses the membrane as a helical span at residues 109–130 (IFVTLDVMMCTASILNLCAISI). The Cytoplasmic portion of the chain corresponds to 131–151 (DRYTAVAMPMLYNTRYSSKRR). Residues 152 to 172 (VTVMIAIVWVLSFTISCPLLF) form a helical membrane-spanning segment. Residues 173-188 (GLNNADQNECIIANPA) lie on the Extracellular side of the membrane. Residues 189 to 213 (FVVYSSIVSFYVPFIVTLLVYIKIY) form a helical membrane-spanning segment. Residues 211-373 (KIYIVLRRRR…SQQKEKKATQ (163 aa)) form an interaction with PPP1R9B region. Residues 214–373 (IVLRRRRKRV…SQQKEKKATQ (160 aa)) are Cytoplasmic-facing. The interval 281 to 332 (MEMLSSTSPPERTRYSPIPPSHHQLTLPDPSHHGLHSTPDSPAKPEKNGHAK) is disordered. The chain crosses the membrane as a helical span at residues 374–395 (MLAIVLGVFIICWLPFFITHIL). Residues 396–409 (NIHCDCNIPPVLYS) lie on the Extracellular side of the membrane. An intrachain disulfide couples Cys-399 to Cys-401. Residues 410–431 (AFTWLGYVNSAVNPIIYTTFNI) traverse the membrane as a helical segment. Residues 432–443 (EFRKAFLKILHC) lie on the Cytoplasmic side of the membrane. Cys-443 carries the S-palmitoyl cysteine lipid modification.

It belongs to the G-protein coupled receptor 1 family. As to quaternary structure, forms homo- and heterooligomers with DRD4. The interaction with DRD4 may modulate agonist-induced downstream signaling. Interacts with CADPS and CADPS2. Interacts with GPRASP1, PPP1R9B and CLIC6. Interacts with ARRB2. Interacts with HTR2A. Interacts with DRD1. Interacts with KCNA2. Post-translationally, palmitoylated. Palmitoylation which is required for proper localization to the plasma membrane and stability of the receptor could be carried on by ZDHHC4, ZDHHC3 and ZDHHC8.

Its subcellular location is the cell membrane. It is found in the golgi apparatus membrane. Functionally, dopamine receptor whose activity is mediated by G proteins which inhibit adenylyl cyclase. Positively regulates postnatal regression of retinal hyaloid vessels via suppression of VEGFR2/KDR activity, downstream of OPN5. The sequence is that of D(2) dopamine receptor (DRD2) from Chlorocebus aethiops (Green monkey).